The following is a 104-amino-acid chain: ATP-dependent Clp protease adapter protein ClpS (104 aa).

It belongs to the ClpS family. Binds to the N-terminal domain of the chaperone ClpA.

Its function is as follows. Involved in the modulation of the specificity of the ClpAP-mediated ATP-dependent protein degradation. This Bordetella bronchiseptica (strain ATCC BAA-588 / NCTC 13252 / RB50) (Alcaligenes bronchisepticus) protein is ATP-dependent Clp protease adapter protein ClpS.